A 130-amino-acid polypeptide reads, in one-letter code: MQDLISLEIITPLGMIYQGDARLVVLPGSEGEFGVLKGHASLISSLKAGIIDIEKSDSTHELVAIDSGHAKVSETKVSVLAKGAVWVGGNSDSEIAKRLEEAKDLIKSMSSDSIALASTFAKMDNNVRQK.

It belongs to the ATPase epsilon chain family. As to quaternary structure, F-type ATPases have 2 components, CF(1) - the catalytic core - and CF(0) - the membrane proton channel. CF(1) has five subunits: alpha(3), beta(3), gamma(1), delta(1), epsilon(1). CF(0) has three main subunits: a, b and c.

It localises to the cell inner membrane. Its function is as follows. Produces ATP from ADP in the presence of a proton gradient across the membrane. In Campylobacter lari (strain RM2100 / D67 / ATCC BAA-1060), this protein is ATP synthase epsilon chain.